Consider the following 1236-residue polypeptide: ESX-4 secretion system protein EccC4 (1236 aa).

Transmembrane regions (helical) follow at residues 32-52 (LLPV…FLPG) and 59-79 (PTFL…AVTG). 3 consecutive FtsK domains span residues 407–607 (GTAV…SESR), 747–936 (RVPL…ADSE), and 1018–1201 (GQPV…DEGA). ATP is bound by residues 430–437 (GATGSGKS), 765–772 (GAPQTGKS), and 1035–1042 (GDNECGKT).

As to quaternary structure, part of the ESX-4 / type VII secretion system (T7SS), which is composed of cytosolic and membrane components.

The protein resides in the cell membrane. The protein is ESX-4 secretion system protein EccC4 (eccC4) of Mycobacterium tuberculosis (strain ATCC 25618 / H37Rv).